The sequence spans 235 residues: Orotidine 5'-phosphate decarboxylase (235 aa).

Substrate contacts are provided by residues Asp11, Lys33, 60-69 (DLKFHDIPNT), Thr119, Arg180, Gln189, Gly209, and Arg210. Residue Lys62 is the Proton donor of the active site.

Belongs to the OMP decarboxylase family. Type 1 subfamily. Homodimer.

It catalyses the reaction orotidine 5'-phosphate + H(+) = UMP + CO2. It functions in the pathway pyrimidine metabolism; UMP biosynthesis via de novo pathway; UMP from orotate: step 2/2. Its function is as follows. Catalyzes the decarboxylation of orotidine 5'-monophosphate (OMP) to uridine 5'-monophosphate (UMP). The sequence is that of Orotidine 5'-phosphate decarboxylase from Alkalilimnicola ehrlichii (strain ATCC BAA-1101 / DSM 17681 / MLHE-1).